The sequence spans 668 residues: BTB/POZ domain-containing protein At5g66560 (668 aa).

In terms of domain architecture, BTB spans 21 to 133; sequence SDIEIEVDDM…CYGVKMDLSA (113 aa). Positions 73–84 are enriched in basic and acidic residues; sequence ETDKKGKGHEIE. Residues 73–98 are disordered; it reads ETDKKGKGHEIEDDKEEEEVEEQEIE. Acidic residues predominate over residues 85-98; it reads DDKEEEEVEEQEIE. The region spanning 254–530 is the NPH3 domain; it reads ELWFEDLTQL…VQVLFFEQLQ (277 aa). Tyr471 carries the phosphotyrosine modification.

It belongs to the NPH3 family.

The protein operates within protein modification; protein ubiquitination. Functionally, may act as a substrate-specific adapter of an E3 ubiquitin-protein ligase complex (CUL3-RBX1-BTB) which mediates the ubiquitination and subsequent proteasomal degradation of target proteins. The sequence is that of BTB/POZ domain-containing protein At5g66560 from Arabidopsis thaliana (Mouse-ear cress).